Here is a 37-residue protein sequence, read N- to C-terminus: Large ribosomal subunit protein bL36c (37 aa).

This sequence belongs to the bacterial ribosomal protein bL36 family.

The protein resides in the plastid. Its subcellular location is the chloroplast. The sequence is that of Large ribosomal subunit protein bL36c from Pinus koraiensis (Korean pine).